We begin with the raw amino-acid sequence, 332 residues long: Ferredoxin--NADP reductase 1 (332 aa).

FAD is bound by residues D35, K43, F48, V88, F123, D284, and T325.

The protein belongs to the ferredoxin--NADP reductase type 2 family. As to quaternary structure, homodimer. FAD serves as cofactor.

It catalyses the reaction 2 reduced [2Fe-2S]-[ferredoxin] + NADP(+) + H(+) = 2 oxidized [2Fe-2S]-[ferredoxin] + NADPH. The chain is Ferredoxin--NADP reductase 1 from Listeria welshimeri serovar 6b (strain ATCC 35897 / DSM 20650 / CCUG 15529 / CIP 8149 / NCTC 11857 / SLCC 5334 / V8).